The sequence spans 657 residues: N-acetylgalactosaminyltransferase 7 (657 aa).

The Cytoplasmic portion of the chain corresponds to Met-1–Gly-6. Residues Phe-7–Ser-29 form a helical; Signal-anchor for type II membrane protein membrane-spanning segment. Disordered stretches follow at residues Ser-30 to Phe-66 and Glu-83 to Arg-105. Residues Ser-30–Val-657 lie on the Lumenal side of the membrane. 5 disulfide bridges follow: Cys-197–Cys-435, Cys-426–Cys-507, Cys-545–Cys-562, Cys-585–Cys-600, and Cys-625–Cys-640. The catalytic subdomain A stretch occupies residues Leu-206–Pro-317. 2 residues coordinate substrate: Asp-247 and Arg-277. 2 residues coordinate Mn(2+): Asp-301 and His-303. The tract at residues Pro-381–Arg-443 is catalytic subdomain B. Trp-412 serves as a coordination point for substrate. His-440 provides a ligand contact to Mn(2+). Arg-443 lines the substrate pocket. The Ricin B-type lectin domain maps to Val-532–Asn-652.

Belongs to the glycosyltransferase 2 family. GalNAc-T subfamily. Mn(2+) serves as cofactor. In terms of tissue distribution, highly expressed in sublingual gland. Expressed at lower level in stomach, small intestiine and colon.

It localises to the golgi apparatus membrane. The catalysed reaction is L-seryl-[protein] + UDP-N-acetyl-alpha-D-galactosamine = a 3-O-[N-acetyl-alpha-D-galactosaminyl]-L-seryl-[protein] + UDP + H(+). It catalyses the reaction L-threonyl-[protein] + UDP-N-acetyl-alpha-D-galactosamine = a 3-O-[N-acetyl-alpha-D-galactosaminyl]-L-threonyl-[protein] + UDP + H(+). It participates in protein modification; protein glycosylation. Functionally, glycopeptide transferase involved in O-linked oligosaccharide biosynthesis, which catalyzes the transfer of an N-acetyl-D-galactosamine residue to an already glycosylated peptide. In contrast to other proteins of the family, it does not act as a peptide transferase that transfers GalNAc onto serine or threonine residue on the protein receptor, but instead requires the prior addition of a GalNAc on a peptide before adding additional GalNAc moieties. Some peptide transferase activity is however not excluded, considering that its appropriate peptide substrate may remain unidentified. The polypeptide is N-acetylgalactosaminyltransferase 7 (Galnt7) (Mus musculus (Mouse)).